The following is a 565-amino-acid chain: Thiol:disulfide interchange protein DsbD (565 aa).

The signal sequence occupies residues 1 to 19 (MAQRIFTLILLLCSTSVFA). 2 disulfides stabilise this stretch: Cys-122–Cys-128 and Cys-182–Cys-304. A run of 7 helical transmembrane segments spans residues 163–183 (LPFS…TPCV), 208–228 (LLTF…GLVV), 243–263 (YVLI…FGLF), 296–316 (IAGL…LLYI), 323–343 (WLGG…LMLI), 357–377 (WMEQ…VFLL), and 384–404 (VWGL…AFIT). In terms of domain architecture, Thioredoxin spans 434–565 (WAFGATHTAQ…FSAHLRDRQP (132 aa)). An intrachain disulfide couples Cys-480 to Cys-483.

It belongs to the thioredoxin family. DsbD subfamily.

The protein localises to the cell inner membrane. The enzyme catalyses [protein]-dithiol + NAD(+) = [protein]-disulfide + NADH + H(+). It catalyses the reaction [protein]-dithiol + NADP(+) = [protein]-disulfide + NADPH + H(+). Functionally, required to facilitate the formation of correct disulfide bonds in some periplasmic proteins and for the assembly of the periplasmic c-type cytochromes. Acts by transferring electrons from cytoplasmic thioredoxin to the periplasm. This transfer involves a cascade of disulfide bond formation and reduction steps. The sequence is that of Thiol:disulfide interchange protein DsbD from Shigella flexneri serotype 5b (strain 8401).